Here is a 73-residue protein sequence, read N- to C-terminus: Translation initiation factor IF-1 (73 aa).

Residues 1–73 form the S1-like domain; that stretch reads MAKKDGAIEV…TRGRIVYRYK (73 aa).

Belongs to the IF-1 family. Component of the 30S ribosomal translation pre-initiation complex which assembles on the 30S ribosome in the order IF-2 and IF-3, IF-1 and N-formylmethionyl-tRNA(fMet); mRNA recruitment can occur at any time during PIC assembly.

It is found in the cytoplasm. In terms of biological role, one of the essential components for the initiation of protein synthesis. Stabilizes the binding of IF-2 and IF-3 on the 30S subunit to which N-formylmethionyl-tRNA(fMet) subsequently binds. Helps modulate mRNA selection, yielding the 30S pre-initiation complex (PIC). Upon addition of the 50S ribosomal subunit IF-1, IF-2 and IF-3 are released leaving the mature 70S translation initiation complex. The polypeptide is Translation initiation factor IF-1 (Mycolicibacterium gilvum (strain PYR-GCK) (Mycobacterium gilvum (strain PYR-GCK))).